Here is a 271-residue protein sequence, read N- to C-terminus: Putative pyrimidine-specific ribonucleoside hydrolase RihB (271 aa).

Substrate contacts are provided by Q185 and H197.

Belongs to the IUNH family. RihB subfamily.

The enzyme catalyses a pyrimidine ribonucleoside + H2O = a pyrimidine nucleobase + D-ribose. This Shigella dysenteriae serotype 1 (strain Sd197) protein is Putative pyrimidine-specific ribonucleoside hydrolase RihB (rihB).